The chain runs to 254 residues: Reaction center protein L chain (254 aa).

3 helical membrane-spanning segments follow: residues 10 to 32 (FFGVTAAFFIMLGTALIIWGAAL), 60 to 88 (GGLWQIITVCAIGAFGSWALREVEISRKL), and 93 to 115 (HVPAAFSVAIFAYVTLEVIRPLL). 2 residues coordinate (7R,8Z)-bacteriochlorophyll b: H130 and H150. A helical transmembrane segment spans residues 148–175 (PMHMVAVTLFFTTTLALALHGSLVLAAI). Residue H167 coordinates Fe cation. F193 contacts a ubiquinone. Residues 202–227 (GTLGIHRLGLFLALGAGFASATCILL) form a helical membrane-spanning segment. A Fe cation-binding site is contributed by H207.

This sequence belongs to the reaction center PufL/M/PsbA/D family. In terms of assembly, reaction center is composed of four bacteriochlorophylls, two bacteriopheophytins, two ubiquinones, one iron, and two highly hydrophobic polypeptide chains (designated L and M).

Its subcellular location is the cell inner membrane. The reaction center is a membrane-bound complex that mediates the initial photochemical event in the electron transfer process of photosynthesis. The sequence is that of Reaction center protein L chain (pufL) from Acidiphilium organovorum.